A 131-amino-acid chain; its full sequence is Large ribosomal subunit protein bL17 (131 aa).

Belongs to the bacterial ribosomal protein bL17 family. In terms of assembly, part of the 50S ribosomal subunit. Contacts protein L32.

The sequence is that of Large ribosomal subunit protein bL17 from Paraburkholderia phymatum (strain DSM 17167 / CIP 108236 / LMG 21445 / STM815) (Burkholderia phymatum).